The chain runs to 148 residues: MNDPKQIEKLYKLIAAGEGFNPNSPLGSMMVETQALTKKFAVISFFGAVEKRELDMIKTFVEKGEIDINVKNLVPQGLILTRPTTALGIAIAQGNSEEVIKYLLANGADPKLAFDDFKKSANIDGINQLIKIAPDMIACRKKYMNLNN.

Residues 82–115 (RPTTALGIAIAQGNSEEVIKYLLANGADPKLAFD) form an ANK repeat.

This chain is Putative ankyrin repeat protein RF_1158, found in Rickettsia felis (strain ATCC VR-1525 / URRWXCal2) (Rickettsia azadi).